Reading from the N-terminus, the 573-residue chain is Dihydroxy-acid dehydratase (573 aa).

Cys62 is a binding site for [2Fe-2S] cluster. Asp94 contacts Mg(2+). Residue Cys135 coordinates [2Fe-2S] cluster. Mg(2+)-binding residues include Asp136 and Lys137. The residue at position 137 (Lys137) is an N6-carboxylysine. A [2Fe-2S] cluster-binding site is contributed by Cys212. Glu463 is a Mg(2+) binding site. Ser489 serves as the catalytic Proton acceptor.

The protein belongs to the IlvD/Edd family. As to quaternary structure, homodimer. [2Fe-2S] cluster serves as cofactor. Mg(2+) is required as a cofactor.

The catalysed reaction is (2R)-2,3-dihydroxy-3-methylbutanoate = 3-methyl-2-oxobutanoate + H2O. The enzyme catalyses (2R,3R)-2,3-dihydroxy-3-methylpentanoate = (S)-3-methyl-2-oxopentanoate + H2O. The protein operates within amino-acid biosynthesis; L-isoleucine biosynthesis; L-isoleucine from 2-oxobutanoate: step 3/4. Its pathway is amino-acid biosynthesis; L-valine biosynthesis; L-valine from pyruvate: step 3/4. In terms of biological role, functions in the biosynthesis of branched-chain amino acids. Catalyzes the dehydration of (2R,3R)-2,3-dihydroxy-3-methylpentanoate (2,3-dihydroxy-3-methylvalerate) into 2-oxo-3-methylpentanoate (2-oxo-3-methylvalerate) and of (2R)-2,3-dihydroxy-3-methylbutanoate (2,3-dihydroxyisovalerate) into 2-oxo-3-methylbutanoate (2-oxoisovalerate), the penultimate precursor to L-isoleucine and L-valine, respectively. In Arthrobacter sp. (strain FB24), this protein is Dihydroxy-acid dehydratase.